A 241-amino-acid chain; its full sequence is 1-(5-phosphoribosyl)-5-[(5-phosphoribosylamino)methylideneamino] imidazole-4-carboxamide isomerase (241 aa).

Asp-8 (proton acceptor) is an active-site residue. The Proton donor role is filled by Asp-130.

The protein belongs to the HisA/HisF family.

The protein resides in the cytoplasm. It catalyses the reaction 1-(5-phospho-beta-D-ribosyl)-5-[(5-phospho-beta-D-ribosylamino)methylideneamino]imidazole-4-carboxamide = 5-[(5-phospho-1-deoxy-D-ribulos-1-ylimino)methylamino]-1-(5-phospho-beta-D-ribosyl)imidazole-4-carboxamide. It participates in amino-acid biosynthesis; L-histidine biosynthesis; L-histidine from 5-phospho-alpha-D-ribose 1-diphosphate: step 4/9. The protein is 1-(5-phosphoribosyl)-5-[(5-phosphoribosylamino)methylideneamino] imidazole-4-carboxamide isomerase of Leptospira interrogans serogroup Icterohaemorrhagiae serovar copenhageni (strain Fiocruz L1-130).